The following is a 582-amino-acid chain: DNA mismatch repair protein MutL (582 aa).

The protein belongs to the DNA mismatch repair MutL/HexB family.

In terms of biological role, this protein is involved in the repair of mismatches in DNA. It is required for dam-dependent methyl-directed DNA mismatch repair. May act as a 'molecular matchmaker', a protein that promotes the formation of a stable complex between two or more DNA-binding proteins in an ATP-dependent manner without itself being part of a final effector complex. This chain is DNA mismatch repair protein MutL, found in Chlamydia abortus (strain DSM 27085 / S26/3) (Chlamydophila abortus).